The following is a 160-amino-acid chain: Large ribosomal subunit protein eL29 (160 aa).

A compositionally biased stretch (basic residues) spans 1–26 (MAKSKNHTTHNQSRKWHRNGIKKPRS). Disordered regions lie at residues 1–34 (MAKS…SLKG) and 115–160 (RLCQ…VKAP). Lys-5 carries the post-translational modification N6-methyllysine. Ser-31 carries the post-translational modification Phosphoserine. Lys-33 carries the N6-acetyllysine modification. A compositionally biased stretch (low complexity) spans 126–160 (KAGAKAPAKAQASAPAQAPKGAQAPKGAQAPVKAP). Tandem repeats lie at residues 127–134 (AGAKAPAK) and 135–142 (AQASAPAQ). Positions 127–142 (AGAKAPAKAQASAPAQ) are 2 X 8 AA tandem repeats of A-X-A-K-A-P-A-[KQ]. Ser-138 bears the Phosphoserine mark. At Lys-145 the chain carries N6-acetyllysine.

Belongs to the eukaryotic ribosomal protein eL29 family. In terms of assembly, component of the large ribosomal subunit.

The protein localises to the cytoplasm. Component of the large ribosomal subunit. The ribosome is a large ribonucleoprotein complex responsible for the synthesis of proteins in the cell. The sequence is that of Large ribosomal subunit protein eL29 (Rpl29) from Mus musculus (Mouse).